We begin with the raw amino-acid sequence, 484 residues long: Iroquois-class homeodomain protein IRX-5 (484 aa).

Residues 112–174 constitute a DNA-binding region (homeobox; TALE-type); it reads DPAYRKNATR…NARRRLKKEN (63 aa). Disordered regions lie at residues 176–393 and 424–443; these read MTWT…QCPF and GHPGPGPSPTAGPGSHFNGL. Acidic residues predominate over residues 185 to 202; the sequence is EDEEEEENIDLEKNDEDE. Composition is skewed to basic and acidic residues over residues 203–212 and 249–265; these read PQKPEDKGDL and SDFKESSSEGRHDELPR. Ser273 carries the phosphoserine modification. Residues 318–328 are compositionally biased toward pro residues; that stretch reads SPPPPPPPPPA. Residues 375–389 are compositionally biased toward low complexity; it reads SRASPAPAPARSPSA. Ser465 is subject to Phosphoserine.

Belongs to the TALE/IRO homeobox family. In terms of tissue distribution, not expressed in the developing metanephric kidney or adult kidney.

The protein localises to the nucleus. Its function is as follows. Establishes the cardiac repolarization gradient by its repressive actions on the KCND2 potassium-channel gene. Required for retinal cone bipolar cell differentiation. May regulate contrast adaptation in the retina and control specific aspects of visual function in circuits of the mammalian retina. Involved in craniofacial and gonadal development. Modulates the migration of progenitor cell populations in branchial arches and gonads by repressing CXCL12. The protein is Iroquois-class homeodomain protein IRX-5 (Irx5) of Mus musculus (Mouse).